A 257-amino-acid chain; its full sequence is NAD-capped RNA hydrolase NudC (257 aa).

Residues K25 and R69 each coordinate substrate. C98 and C101 together coordinate Zn(2+). Residue E111 coordinates substrate. Zn(2+) is bound by residues C116 and C119. Substrate is bound at residue Y124. The region spanning 125–248 (PQIAPCIIVA…TVARRLIEDT (124 aa)) is the Nudix hydrolase domain. A divalent metal cation is bound by residues A158, E174, and E178. The Nudix box signature appears at 159 to 180 (GFVEVGETLEQAVAREVMEESG). Substrate is bound at residue 192–199 (QPWPFPQS). E219 is a binding site for a divalent metal cation. A241 provides a ligand contact to substrate.

Belongs to the Nudix hydrolase family. NudC subfamily. As to quaternary structure, homodimer. Mg(2+) serves as cofactor. The cofactor is Mn(2+). Zn(2+) is required as a cofactor.

The enzyme catalyses a 5'-end NAD(+)-phospho-ribonucleoside in mRNA + H2O = a 5'-end phospho-adenosine-phospho-ribonucleoside in mRNA + beta-nicotinamide D-ribonucleotide + 2 H(+). The catalysed reaction is NAD(+) + H2O = beta-nicotinamide D-ribonucleotide + AMP + 2 H(+). It carries out the reaction NADH + H2O = reduced beta-nicotinamide D-ribonucleotide + AMP + 2 H(+). Its function is as follows. mRNA decapping enzyme that specifically removes the nicotinamide adenine dinucleotide (NAD) cap from a subset of mRNAs by hydrolyzing the diphosphate linkage to produce nicotinamide mononucleotide (NMN) and 5' monophosphate mRNA. The NAD-cap is present at the 5'-end of some mRNAs and stabilizes RNA against 5'-processing. Has preference for mRNAs with a 5'-end purine. Catalyzes the hydrolysis of a broad range of dinucleotide pyrophosphates. The protein is NAD-capped RNA hydrolase NudC of Escherichia fergusonii (strain ATCC 35469 / DSM 13698 / CCUG 18766 / IAM 14443 / JCM 21226 / LMG 7866 / NBRC 102419 / NCTC 12128 / CDC 0568-73).